The primary structure comprises 280 residues: MAIRKYKPTTPGRRGASVSDFAEITRSTPEKSLVRPLHGRGGRNAHGRITTRHKGGGHKRAYRMIDFRRNDKDGVNAKVAHIEYDPNRTARIALLHYLDGEKRYIIAPNGLSQGDVVESGANADIKPGNNLPLRNIPAGTLIHAVELRPGGGAKLARSAGSSIQLLGKEASYASLRMPSGEIRRVDVRCRATVGEVGNAEQANINWGKAGRMRWKGKRPSVRGVVMNPVDHPHGGGEGKTSGGRHPVSPWGKPEGRTRNANKSSNKFIVRRRRTGKKHSR.

Disordered regions lie at residues 27–59 (STPEKSLVRPLHGRGGRNAHGRITTRHKGGGHK) and 225–280 (VMNP…KHSR). 2 stretches are compositionally biased toward basic residues: residues 37–59 (LHGRGGRNAHGRITTRHKGGGHK) and 268–280 (IVRRRRTGKKHSR).

It belongs to the universal ribosomal protein uL2 family. As to quaternary structure, part of the 50S ribosomal subunit. Forms a bridge to the 30S subunit in the 70S ribosome.

One of the primary rRNA binding proteins. Required for association of the 30S and 50S subunits to form the 70S ribosome, for tRNA binding and peptide bond formation. It has been suggested to have peptidyltransferase activity; this is somewhat controversial. Makes several contacts with the 16S rRNA in the 70S ribosome. The protein is Large ribosomal subunit protein uL2 of Mycobacterium bovis (strain ATCC BAA-935 / AF2122/97).